The following is a 243-amino-acid chain: Venom nerve growth factor 1 (243 aa).

An N-terminal signal peptide occupies residues 1 to 18; it reads MSMLCYTLIIAFLIGIWA. Positions 19 to 125 are excised as a propeptide; that stretch reads APKSEDNVPL…TLNRNIRAKR (107 aa). Residues 47–66 are compositionally biased toward basic and acidic residues; it reads GLKTSRNTDQRHPAPKKAED. The segment at 47–69 is disordered; sequence GLKTSRNTDQRHPAPKKAEDQEL. 3 disulfides stabilise this stretch: Cys-139–Cys-204, Cys-182–Cys-232, and Cys-192–Cys-234. The N-linked (GlcNAc...) asparagine glycan is linked to Asn-148.

The protein belongs to the NGF-beta family. Homodimer; non-covalently linked. Expressed by the venom gland.

It localises to the secreted. Its function is as follows. Nerve growth factor is important for the development and maintenance of the sympathetic and sensory nervous systems. It stimulates division and differentiation of sympathetic and embryonic sensory neurons as well as basal forebrain cholinergic neurons in the brain. Its relevance in the snake venom is not clear. However, it has been shown to inhibit metalloproteinase-dependent proteolysis of platelet glycoprotein Ib alpha, suggesting a metalloproteinase inhibition to prevent metalloprotease autodigestion and/or protection against prey proteases. Binds a lipid between the two protein chains in the homodimer. The lipid-bound form promotes histamine relase from mouse mast cells, contrary to the lipid-free form. The protein is Venom nerve growth factor 1 of Oxyuranus microlepidotus (Inland taipan).